The sequence spans 711 residues: Polyribonucleotide nucleotidyltransferase (711 aa).

Mg(2+)-binding residues include D486 and D492. In terms of domain architecture, KH spans 553–612 (PRIHTIKINPDKIKDVIGKGGSVIRALTEETGTTIEIEDDGTVKIAATDGEKAKHAIRRI). The 69-residue stretch at 622–690 (GRVYTGKVTR…RQGRIRLSIK (69 aa)) folds into the S1 motif domain. The segment at 689–711 (IKEATEQSQPAAAPEAPAAEQGE) is disordered. The span at 694–711 (EQSQPAAAPEAPAAEQGE) shows a compositional bias: low complexity.

This sequence belongs to the polyribonucleotide nucleotidyltransferase family. In terms of assembly, component of the RNA degradosome, which is a multiprotein complex involved in RNA processing and mRNA degradation. Requires Mg(2+) as cofactor.

The protein resides in the cytoplasm. It catalyses the reaction RNA(n+1) + phosphate = RNA(n) + a ribonucleoside 5'-diphosphate. In terms of biological role, involved in mRNA degradation. Catalyzes the phosphorolysis of single-stranded polyribonucleotides processively in the 3'- to 5'-direction. This is Polyribonucleotide nucleotidyltransferase from Escherichia coli O8 (strain IAI1).